Consider the following 976-residue polypeptide: Leucine--tRNA ligase (976 aa).

Positions 63–74 (PYPSGVGLHVGH) match the 'HIGH' region motif. A 'KMSKS' region motif is present at residues 745-749 (KMGKS). Residue K748 participates in ATP binding.

This sequence belongs to the class-I aminoacyl-tRNA synthetase family.

The protein resides in the cytoplasm. It catalyses the reaction tRNA(Leu) + L-leucine + ATP = L-leucyl-tRNA(Leu) + AMP + diphosphate. The chain is Leucine--tRNA ligase from Corynebacterium jeikeium (strain K411).